Here is a 643-residue protein sequence, read N- to C-terminus: Phosphatidylinositol-3,5-bisphosphate 3-phosphatase MTMR2 (643 aa).

Polar residues-rich tracts occupy residues Met-1–Ser-12 and Asp-23–Lys-40. Residues Met-1 to Asn-56 form a disordered region. Phosphoserine occurs at positions 6 and 9. Over residues Ser-41–Asp-55 the composition is skewed to low complexity. The residue at position 58 (Ser-58) is a Phosphoserine. The region spanning Asn-68–Gly-139 is the GRAM domain. The Myotubularin phosphatase domain maps to Gly-205–Tyr-580. A 1,2-diacyl-sn-glycero-3-phospho-(1D-myo-inositol-3,5-bisphosphate) is bound by residues Asn-330, Asn-355, and Ile-356. 3 residues coordinate a 1,2-diacyl-sn-glycero-3-phospho-(1D-myo-inositol-3-phosphate): Asn-330, Asn-355, and Ile-356. Residue Cys-417 is the Phosphocysteine intermediate of the active site. Residues Ser-418, Asp-419, Gly-420, Trp-421, Asp-422, Arg-423, Arg-459, and Arg-463 each contribute to the a 1,2-diacyl-sn-glycero-3-phospho-(1D-myo-inositol-3,5-bisphosphate) site. Ser-418, Asp-419, Gly-420, Trp-421, Asp-422, and Arg-423 together coordinate a 1,2-diacyl-sn-glycero-3-phospho-(1D-myo-inositol-3-phosphate). Residue Arg-463 participates in a 1,2-diacyl-sn-glycero-3-phospho-(1D-myo-inositol-3-phosphate) binding. Residues Ile-593–Glu-627 are a coiled coil. Positions Gln-615–Val-643 are disordered. Residues Asn-620–Ser-631 show a composition bias toward low complexity. Over residues Pro-632–Val-643 the composition is skewed to polar residues.

Belongs to the protein-tyrosine phosphatase family. Non-receptor class myotubularin subfamily. In terms of assembly, homodimer (via coiled-coil domain). Heterotetramer consisting of one MTMR2 dimer and one SBF2/MTMR13 dimer; specifically in peripheral nerves stabilizes SBF2/MTMR13 at the membranes and increases MTMR2 catalytic activity towards phosphatidylinositol 3,5-bisphosphate and to a lesser extent towards phosphatidylinositol 3-phosphate. Heterodimer with SBF1/MTMR5; acts as an adapter for the phosphatase MTMR2 to regulate MTMR2 catalytic activity and subcellular location. Heterodimer with MTMR12. Post-translationally, phosphorylation at Ser-58 decreases MTMR2 localization to endocytic vesicular structures.

The protein resides in the cytoplasm. It is found in the early endosome membrane. Its subcellular location is the perinuclear region. The protein localises to the cell projection. It localises to the axon. The protein resides in the endosome membrane. It carries out the reaction a 1,2-diacyl-sn-glycero-3-phospho-(1D-myo-inositol-3,5-bisphosphate) + H2O = a 1,2-diacyl-sn-glycero-3-phospho-(1D-myo-inositol-5-phosphate) + phosphate. The enzyme catalyses a 1,2-diacyl-sn-glycero-3-phospho-(1D-myo-inositol-3-phosphate) + H2O = a 1,2-diacyl-sn-glycero-3-phospho-(1D-myo-inositol) + phosphate. The catalysed reaction is 1,2-dioctanoyl-sn-glycero-3-phospho-(1-D-myo-inositol-3-phosphate) + H2O = 1,2-dioctanoyl-sn-glycero-3-phospho-(1D-myo-inositol) + phosphate. It catalyses the reaction 1,2-dioctanoyl-sn-glycero-3-phospho-(1D-myo-inositol-3,5-bisphosphate) + H2O = 1,2-dioctanoyl-sn-glycero-3-phospho-(1D-myo-inositol-5-phosphate) + phosphate. Its function is as follows. Lipid phosphatase that specifically dephosphorylates the D-3 position of phosphatidylinositol 3-phosphate and phosphatidylinositol 3,5-bisphosphate, generating phosphatidylinositol and phosphatidylinositol 5-phosphate. Regulates the level of these phosphoinositides critical for various biological processes including autophagy initiation and autophagosome maturation. This Pongo abelii (Sumatran orangutan) protein is Phosphatidylinositol-3,5-bisphosphate 3-phosphatase MTMR2.